The sequence spans 524 residues: 2-isopropylmalate synthase (524 aa).

Residues 12 to 274 enclose the Pyruvate carboxyltransferase domain; that stretch reads VIIFDTTLRD…WNRIESKMLT (263 aa). The Mn(2+) site is built by Asp-21, His-209, His-211, and Asn-245. Residues 398–524 are regulatory domain; it reads RLKSLTVIAG…QDAPAVAVAG (127 aa).

Belongs to the alpha-IPM synthase/homocitrate synthase family. LeuA type 1 subfamily. In terms of assembly, homodimer. Mn(2+) serves as cofactor.

It localises to the cytoplasm. The catalysed reaction is 3-methyl-2-oxobutanoate + acetyl-CoA + H2O = (2S)-2-isopropylmalate + CoA + H(+). The protein operates within amino-acid biosynthesis; L-leucine biosynthesis; L-leucine from 3-methyl-2-oxobutanoate: step 1/4. In terms of biological role, catalyzes the condensation of the acetyl group of acetyl-CoA with 3-methyl-2-oxobutanoate (2-ketoisovalerate) to form 3-carboxy-3-hydroxy-4-methylpentanoate (2-isopropylmalate). The polypeptide is 2-isopropylmalate synthase (Rhodopseudomonas palustris (strain BisB5)).